A 165-amino-acid polypeptide reads, in one-letter code: Glycine cleavage system H protein, mitochondrial (165 aa).

The Lipoyl-binding domain maps to 57 to 139 (NAIVGISSYA…YEKGWLFKVD (83 aa)). An N6-lipoyllysine modification is found at Lys98.

The protein belongs to the GcvH family. In terms of assembly, the glycine cleavage system is composed of four proteins: P, T, L and H. Requires (R)-lipoate as cofactor.

The protein localises to the mitochondrion. In terms of biological role, the glycine cleavage system catalyzes the degradation of glycine. The H protein shuttles the methylamine group of glycine from the P protein to the T protein. This chain is Glycine cleavage system H protein, mitochondrial (ppl), found in Drosophila melanogaster (Fruit fly).